A 226-amino-acid chain; its full sequence is 7-cyano-7-deazaguanine synthase (226 aa).

7–17 (ISGGMDSLVTT) provides a ligand contact to ATP. Residues C187, C195, C198, and C201 each contribute to the Zn(2+) site.

It belongs to the QueC family. Requires Zn(2+) as cofactor.

The enzyme catalyses 7-carboxy-7-deazaguanine + NH4(+) + ATP = 7-cyano-7-deazaguanine + ADP + phosphate + H2O + H(+). It participates in purine metabolism; 7-cyano-7-deazaguanine biosynthesis. Its function is as follows. Catalyzes the ATP-dependent conversion of 7-carboxy-7-deazaguanine (CDG) to 7-cyano-7-deazaguanine (preQ(0)). The protein is 7-cyano-7-deazaguanine synthase of Chlorobium limicola (strain DSM 245 / NBRC 103803 / 6330).